An 876-amino-acid chain; its full sequence is MELPVPSLKDVKWSSASFPLDLLVSSYRLPQLVRVDCAGENVEGLRENDCLLIHSCRQWTTITAHSLEEGHYVIGPKIEIPVHYGGQFKLLEQDRDIKEPVQYFNSVEEVAKAFPERVYVMEEITFNVKVASGECNEDTEVYNITLCTGDELTLMGQAEILYAKTSKEKSRLNTIFKKIGKLNSISKLGKGKMPCLICMNHRTNESISLPFQCKGRFSTRSPLEIQMQEGEHTIRNIVEKTRLPVNVTVPSPPPRNSYDLHFIREGHRYKFVNIQTKTVVVCFALHTNKIVPMHFPLHLSVPKFSLPENLIKGEVWQDSVVQHWYNICQEQFDIEEYSRAVRDVKADWSEECKSPKKNWSAGHSHIPNSLSYARDELTQSFHRLSVCVYGNNLHGNSEVNLHGCRDLCGDWAAFPQDSPQYQDSCDSGSDYLFSETSEELTSLPAKPELPYEELWLEQGSVKRSGQPLTRSQSEKNKCDSFRGSLPSRCGTSSLPSPGALLTTKSLDVSLPPPPVPPKSEAVKEECRLLNAPPVPPRSSKPSSPTPSVPPAAENIVRQQTRSPSPTLSYYSSGLHSIGITESETTSSSDNSQVSCYPCNWMKNESSDLESNLTCGSASSEALPSRLSWPNRYCGGAEGLNVNDLPMDQCRSYYSYPRQKTPGTPKKNSPATFDFGGCGSFTGCNQGEFSDTVPGCPKSASYSLESATDRMLGDNSTKQSLSCPALPPRAPKPSEGNALSEPLSLPMKIDGAEEEIQTCSPDFLEEHYLAKKGVQDIFSISYPFSSPLHMQLAPRSCGDGSPWQPPTDLSGLSVEEVSKSLRFIGLSEDVVSFFVSEKIDGNLLVQLTEEILSEDFKLSKLQVKKLLQFINGWRPKM.

Positions 9-318 (KDVKWSSASF…NLIKGEVWQD (310 aa)) are CABIT. At tyrosine 451 the chain carries Phosphotyrosine. Disordered regions lie at residues 460–569 (SVKR…TLSY) and 708–741 (DRML…LSEP). Residues 461 to 471 (VKRSGQPLTRS) show a composition bias toward polar residues. A compositionally biased stretch (pro residues) spans 532-549 (PPVPPRSSKPSSPTPSVP). A compositionally biased stretch (polar residues) spans 556–569 (VRQQTRSPSPTLSY). The 66-residue stretch at 811-876 (LSVEEVSKSL…QFINGWRPKM (66 aa)) folds into the SAM domain.

The protein belongs to the GAREM family.

Functionally, adapter protein that may provide a link between cell surface epidermal growth factor receptor and the MAPK/ERK signaling pathway. May promote cell proliferation. This chain is GRB2-associated and regulator of MAPK protein (garem1), found in Xenopus laevis (African clawed frog).